The chain runs to 511 residues: GATA zinc finger domain-containing protein 15 (511 aa).

The segment covering 1–111 (TNNNNFNNIN…FNDNCNNNSN (111 aa)) has biased composition (low complexity). Disordered stretches follow at residues 1-194 (TNNN…NTFF), 214-313 (NVNN…NENK), and 325-355 (NLQY…VLSP). Residues 124 to 135 (SLQNINQYPLSP) show a composition bias toward polar residues. Low complexity predominate over residues 136–166 (NNNKSSNQHLSHSSSNVNSQYYQTPYYQPSQ). The segment covering 167-185 (KQNSPNSTPPLNGCQYENH) has biased composition (polar residues). Low complexity-rich tracts occupy residues 214–309 (NVNN…NNDN) and 337–351 (SGST…PTSP). The GATA-type zinc finger occupies 453–478 (CQACGTRASPEWRKGPDGFKSLCNAC).

The protein is GATA zinc finger domain-containing protein 15 (gtaO) of Dictyostelium discoideum (Social amoeba).